Reading from the N-terminus, the 234-residue chain is uncharacterized protein (234 aa).

The next 7 helical transmembrane spans lie at 25–45, 57–77, 85–105, 108–128, 142–162, 163–183, and 203–223; these read LMGAGVLVSALVSWIMITFFL, LFFLVLWIIPLVMVVSLQGLA, LPIFIGYAAFMGFLISFTLLM, ATDITLAFVTAAAMFFGLSVY, AFGVAVWGLIIAMFLNFFFAS, TGLTILISLVGVVIFAGLIAW, and WAISMALSLYLDFINMFLFLL.

The protein belongs to the BI1 family.

It localises to the cell membrane. This is an uncharacterized protein from Lactococcus lactis subsp. lactis (strain IL1403) (Streptococcus lactis).